The sequence spans 72 residues: Translation initiation factor IF-1 (72 aa).

An S1-like domain is found at 1–72 (MAKEDCIEMQ…SKARIIFRAR (72 aa)).

This sequence belongs to the IF-1 family. As to quaternary structure, component of the 30S ribosomal translation pre-initiation complex which assembles on the 30S ribosome in the order IF-2 and IF-3, IF-1 and N-formylmethionyl-tRNA(fMet); mRNA recruitment can occur at any time during PIC assembly.

Its subcellular location is the cytoplasm. In terms of biological role, one of the essential components for the initiation of protein synthesis. Stabilizes the binding of IF-2 and IF-3 on the 30S subunit to which N-formylmethionyl-tRNA(fMet) subsequently binds. Helps modulate mRNA selection, yielding the 30S pre-initiation complex (PIC). Upon addition of the 50S ribosomal subunit IF-1, IF-2 and IF-3 are released leaving the mature 70S translation initiation complex. In Haemophilus ducreyi (strain 35000HP / ATCC 700724), this protein is Translation initiation factor IF-1.